The primary structure comprises 219 residues: Orotate phosphoribosyltransferase (219 aa).

Lys26 is a binding site for 5-phospho-alpha-D-ribose 1-diphosphate. Residue 34-35 (FF) participates in orotate binding. Residues 72–73 (YK), Arg98, Lys99, Lys102, His104, and 124–132 (DDVITAGTA) each bind 5-phospho-alpha-D-ribose 1-diphosphate. Positions 128 and 156 each coordinate orotate.

It belongs to the purine/pyrimidine phosphoribosyltransferase family. PyrE subfamily. As to quaternary structure, homodimer. It depends on Mg(2+) as a cofactor.

The catalysed reaction is orotidine 5'-phosphate + diphosphate = orotate + 5-phospho-alpha-D-ribose 1-diphosphate. It functions in the pathway pyrimidine metabolism; UMP biosynthesis via de novo pathway; UMP from orotate: step 1/2. In terms of biological role, catalyzes the transfer of a ribosyl phosphate group from 5-phosphoribose 1-diphosphate to orotate, leading to the formation of orotidine monophosphate (OMP). The protein is Orotate phosphoribosyltransferase of Xylella fastidiosa (strain 9a5c).